Here is a 228-residue protein sequence, read N- to C-terminus: L-ribulose-5-phosphate 4-epimerase UlaF (228 aa).

Substrate contacts are provided by residues 26-27 (GN), 43-44 (SG), and 72-73 (SS). The Zn(2+) site is built by Asp74, His93, and His95. Asp118 functions as the Proton donor/acceptor in the catalytic mechanism. His167 contributes to the Zn(2+) binding site. Residue Tyr225 is the Proton donor/acceptor of the active site.

This sequence belongs to the aldolase class II family. AraD/FucA subfamily. Zn(2+) serves as cofactor.

The enzyme catalyses L-ribulose 5-phosphate = D-xylulose 5-phosphate. It functions in the pathway cofactor degradation; L-ascorbate degradation; D-xylulose 5-phosphate from L-ascorbate: step 4/4. Catalyzes the isomerization of L-ribulose 5-phosphate to D-xylulose 5-phosphate. Is involved in the anaerobic L-ascorbate utilization. The chain is L-ribulose-5-phosphate 4-epimerase UlaF from Shigella sonnei (strain Ss046).